The chain runs to 234 residues: Large ribosomal subunit protein uL1 (234 aa).

The protein belongs to the universal ribosomal protein uL1 family. As to quaternary structure, part of the 50S ribosomal subunit.

Its function is as follows. Binds directly to 23S rRNA. The L1 stalk is quite mobile in the ribosome, and is involved in E site tRNA release. Functionally, protein L1 is also a translational repressor protein, it controls the translation of the L11 operon by binding to its mRNA. This is Large ribosomal subunit protein uL1 from Tolumonas auensis (strain DSM 9187 / NBRC 110442 / TA 4).